Consider the following 232-residue polypeptide: Protein FAM228B (232 aa).

The protein belongs to the FAM228 family.

In Mus musculus (Mouse), this protein is Protein FAM228B (Fam228b).